Reading from the N-terminus, the 218-residue chain is Phosphoenolpyruvate guanylyltransferase (218 aa).

Residues threonine 151, glycine 166, and serine 169 each coordinate phosphoenolpyruvate.

Belongs to the CofC family.

The catalysed reaction is phosphoenolpyruvate + GTP + H(+) = enolpyruvoyl-2-diphospho-5'-guanosine + diphosphate. The protein operates within cofactor biosynthesis; coenzyme F420 biosynthesis. Guanylyltransferase that catalyzes the activation of phosphoenolpyruvate (PEP) as enolpyruvoyl-2-diphospho-5'-guanosine, via the condensation of PEP with GTP. It is involved in the biosynthesis of coenzyme F420, a hydride carrier cofactor. The protein is Phosphoenolpyruvate guanylyltransferase of Mycobacterium sp. (strain KMS).